A 478-amino-acid polypeptide reads, in one-letter code: Alpha-(1,3)-fucosyltransferase FucT (478 aa).

Residues Gly94, 186–189, Arg195, 222–225, Asn240, and 246–250 contribute to the substrate site; these read VASN, VKNK, and YVTEK. The interval 347–353 is important for acceptor specificity; sequence DNPFIFC. Repeat copies occupy residues 364-370, 371-377, 378-384, 385-391, 392-398, 399-405, 406-412, 413-419, 420-426, and 427-433. Residues 364–433 form a 10 X 7 AA tandem repeat of D-D-L-R-[IV]-N-Y region; that stretch reads DDLRVNYDDL…VNYDDLRVNY (70 aa). Residues 434–478 are may be involved in membrane binding; that stretch reads ERLLSKATPLLELSQNTTSKIYRKAYQKSLPLLRAIRRWVKKLGL.

It belongs to the glycosyltransferase 10 family. Homodimer.

Its subcellular location is the membrane. It localises to the cytoplasm. It catalyses the reaction a beta-D-galactosyl-(1-&gt;4)-N-acetyl-beta-D-glucosaminyl derivative + GDP-beta-L-fucose = a beta-D-galactosyl-(1-&gt;4)-[alpha-L-fucosyl-(1-&gt;3)]-N-acetyl-beta-D-glucosaminyl derivative + GDP + H(+). The protein operates within lipopolysaccharide biosynthesis; LPS oligosaccharide biosynthesis. Involved in the biosynthesis of the Lewis X (LeX) trisaccharide of the lipopolysaccharide (LPS) O-antigen. Catalyzes the addition of fucose in alpha 1-3 linkage to Gal-beta-1-4-GlcNAc-beta-O-R (LacNAc-R) type II acceptor. This chain is Alpha-(1,3)-fucosyltransferase FucT, found in Helicobacter pylori (Campylobacter pylori).